A 275-amino-acid polypeptide reads, in one-letter code: MIVTIVGWLVLFVFLPNLMIIGTSFLTRDDASFVKMVFTLDNYTRLLDPLYFEVLLHSLNMALIATLACLVLGYPFAWFLAKLPHKVRPLLLFLLIVPFWTNSLIRIYGLKIFLSTKGYLNEFLLWLGVIDTPIRIMFTPSAVIIGLVYILLPFMVMPLYSSIEKLDKPLLEAARDLGASKLQTFIRIIIPLTMPGIIAGCLLVMLPAMGLFYVSDLMGGAKNLLIGNVIKVQFLNIRDWPFGAATSITLTIVMGLMLLVYWRASRLLNKKVELE.

A helical transmembrane segment spans residues 1–21 (MIVTIVGWLVLFVFLPNLMII). Topologically, residues 22–60 (GTSFLTRDDASFVKMVFTLDNYTRLLDPLYFEVLLHSLN) are periplasmic. The 207-residue stretch at 55–261 (LLHSLNMALI…IVMGLMLLVY (207 aa)) folds into the ABC transmembrane type-1 domain. Residues 61–81 (MALIATLACLVLGYPFAWFLA) traverse the membrane as a helical segment. The Cytoplasmic segment spans residues 82-89 (KLPHKVRP). The chain crosses the membrane as a helical span at residues 90 to 110 (LLLFLLIVPFWTNSLIRIYGL). At 111-135 (KIFLSTKGYLNEFLLWLGVIDTPIR) the chain is on the periplasmic side. Residues 136 to 156 (IMFTPSAVIIGLVYILLPFMV) traverse the membrane as a helical segment. Residues 157–187 (MPLYSSIEKLDKPLLEAARDLGASKLQTFIR) lie on the Cytoplasmic side of the membrane. Residues 188–208 (IIIPLTMPGIIAGCLLVMLPA) traverse the membrane as a helical segment. Residues 209-241 (MGLFYVSDLMGGAKNLLIGNVIKVQFLNIRDWP) are Periplasmic-facing. Residues 242–262 (FGAATSITLTIVMGLMLLVYW) form a helical membrane-spanning segment. Topologically, residues 263-275 (RASRLLNKKVELE) are cytoplasmic.

It belongs to the binding-protein-dependent transport system permease family. CysTW subfamily.

The protein localises to the cell inner membrane. Functionally, required for the activity of the bacterial periplasmic transport system of putrescine and spermidine. This is Spermidine/putrescine transport system permease protein PotB (potB) from Escherichia coli (strain K12).